The following is a 161-amino-acid chain: Large ribosomal subunit protein uL15 (161 aa).

The segment at 1 to 43 is disordered; sequence MKLSEISDNPGARKKRMRIGRGIGSGKGKTGGRGGKGQTARSG. The span at 21 to 37 shows a compositional bias: gly residues; the sequence is RGIGSGKGKTGGRGGKG.

The protein belongs to the universal ribosomal protein uL15 family. Part of the 50S ribosomal subunit.

In terms of biological role, binds to the 23S rRNA. This Rhodopseudomonas palustris (strain HaA2) protein is Large ribosomal subunit protein uL15.